A 325-amino-acid polypeptide reads, in one-letter code: Phosphate acyltransferase (325 aa).

The protein belongs to the PlsX family. In terms of assembly, homodimer. Probably interacts with PlsY.

Its subcellular location is the cytoplasm. The catalysed reaction is a fatty acyl-[ACP] + phosphate = an acyl phosphate + holo-[ACP]. Its pathway is lipid metabolism; phospholipid metabolism. Functionally, catalyzes the reversible formation of acyl-phosphate (acyl-PO(4)) from acyl-[acyl-carrier-protein] (acyl-ACP). This enzyme utilizes acyl-ACP as fatty acyl donor, but not acyl-CoA. The chain is Phosphate acyltransferase from Mycoplasmopsis pulmonis (strain UAB CTIP) (Mycoplasma pulmonis).